We begin with the raw amino-acid sequence, 57 residues long: Large ribosomal subunit protein bL32 (57 aa).

This sequence belongs to the bacterial ribosomal protein bL32 family.

The polypeptide is Large ribosomal subunit protein bL32 (Geobacillus kaustophilus (strain HTA426)).